Here is a 738-residue protein sequence, read N- to C-terminus: Ethylene receptor 1 (738 aa).

3 consecutive transmembrane segments (helical) span residues 23-43 (ISDFFIAIAYFSIPLELIYFV), 53-73 (WVLVQFGAFIVLCGATHLINL), and 92-112 (VLTAVVSCATALMLVHIIPDL). Positions 65 and 69 each coordinate Cu cation. The 150-residue stretch at 158 to 307 (DRHTILKTTL…VVADQVAVAL (150 aa)) folds into the GAF domain. The 236-residue stretch at 350–585 (VMNHEMRTPM…IFDVKLGISE (236 aa)) folds into the Histidine kinase domain. A Phosphohistidine; by autocatalysis modification is found at His353. ADP is bound by residues 470-473 (NAVK), Asp513, Lys529, Ser544, and Leu548. In terms of domain architecture, Response regulatory spans 611–729 (KVLVMDENGV…NIRDVLSDLL (119 aa)). Position 659 is a 4-aspartylphosphate (Asp659). Lys714 participates in a covalent cross-link: Glycyl lysine isopeptide (Lys-Gly) (interchain with G-Cter in ubiquitin).

The protein belongs to the ethylene receptor family. Homodimer; disulfide-linked. Heteromer with ERS1, ERS2, ETR2 and EIN4. Interacts with AHP1, AHP2 and AHP3. Interacts with RTE1. Interacts with EIN2. Cu cation serves as cofactor. Autophosphorylated. Phosphorylation at His-353 modulates the interaction with EIN2. In terms of tissue distribution, leaves, roots, stems, seedlings, flowers, anthers, carpels and ovules.

The protein localises to the endoplasmic reticulum membrane. It carries out the reaction ATP + protein L-histidine = ADP + protein N-phospho-L-histidine.. Its function is as follows. Ethylene receptor related to bacterial two-component regulators. Acts as a redundant negative regulator of ethylene signaling. In the presence of ethylene, the auto-kinase activity of ETR1 is inhibited and the non-phosphorylated kinase domain binds tightly to the corresponding domain of EIN2. In Arabidopsis thaliana (Mouse-ear cress), this protein is Ethylene receptor 1.